Consider the following 386-residue polypeptide: S-adenosylmethionine synthase (386 aa).

Histidine 16 serves as a coordination point for ATP. Aspartate 18 is a binding site for Mg(2+). Residue glutamate 44 participates in K(+) binding. L-methionine contacts are provided by glutamate 57 and glutamine 100. Residues 100 to 110 form a flexible loop region; the sequence is QSPDINQGVDR. Residues 164 to 166, 230 to 231, aspartate 239, 245 to 246, alanine 262, and lysine 266 each bind ATP; these read DGK, KF, and RK. Aspartate 239 contributes to the L-methionine binding site. Lysine 270 contacts L-methionine.

Belongs to the AdoMet synthase family. In terms of assembly, homotetramer; dimer of dimers. The cofactor is Mg(2+). K(+) is required as a cofactor.

Its subcellular location is the cytoplasm. The enzyme catalyses L-methionine + ATP + H2O = S-adenosyl-L-methionine + phosphate + diphosphate. The protein operates within amino-acid biosynthesis; S-adenosyl-L-methionine biosynthesis; S-adenosyl-L-methionine from L-methionine: step 1/1. Catalyzes the formation of S-adenosylmethionine (AdoMet) from methionine and ATP. The overall synthetic reaction is composed of two sequential steps, AdoMet formation and the subsequent tripolyphosphate hydrolysis which occurs prior to release of AdoMet from the enzyme. This chain is S-adenosylmethionine synthase, found in Wolinella succinogenes (strain ATCC 29543 / DSM 1740 / CCUG 13145 / JCM 31913 / LMG 7466 / NCTC 11488 / FDC 602W) (Vibrio succinogenes).